The sequence spans 224 residues: Transcriptional regulatory protein TctD (224 aa).

Positions 2–116 (RLLLAEDNRE…ELDARLRALL (115 aa)) constitute a Response regulatory domain. D51 carries the post-translational modification 4-aspartylphosphate. Positions 121-219 (GQVHEVQQLG…LRGLGYVLER (99 aa)) form a DNA-binding region, ompR/PhoB-type.

Transcriptional activator of the tctI tricarboxylate transport system operon. The sequence is that of Transcriptional regulatory protein TctD (tctD) from Salmonella typhimurium (strain SL1344).